We begin with the raw amino-acid sequence, 654 residues long: Glutamyl-tRNA(Gln) amidotransferase subunit B, mitochondrial (654 aa).

The N-terminal 8 residues, 1 to 8 (MGRIPTRE), are a transit peptide targeting the mitochondrion. A disordered region spans residues 79-101 (DQAKASKAQAKGKKKRSSADNQT).

It belongs to the GatB/GatE family. GatB subfamily. As to quaternary structure, subunit of the heterotrimeric GatCAB amidotransferase (AdT) complex, composed of A, B and C subunits.

Its subcellular location is the mitochondrion. It carries out the reaction L-glutamyl-tRNA(Gln) + L-glutamine + ATP + H2O = L-glutaminyl-tRNA(Gln) + L-glutamate + ADP + phosphate + H(+). Functionally, allows the formation of correctly charged Gln-tRNA(Gln) through the transamidation of misacylated Glu-tRNA(Gln) in the mitochondria. The reaction takes place in the presence of glutamine and ATP through an activated gamma-phospho-Glu-tRNA(Gln). This Pyricularia oryzae (strain 70-15 / ATCC MYA-4617 / FGSC 8958) (Rice blast fungus) protein is Glutamyl-tRNA(Gln) amidotransferase subunit B, mitochondrial.